Reading from the N-terminus, the 90-residue chain is DNA-directed RNA polymerase subunit omega (90 aa).

This sequence belongs to the RNA polymerase subunit omega family. The RNAP catalytic core consists of 2 alpha, 1 beta, 1 beta' and 1 omega subunit. When a sigma factor is associated with the core the holoenzyme is formed, which can initiate transcription.

The catalysed reaction is RNA(n) + a ribonucleoside 5'-triphosphate = RNA(n+1) + diphosphate. In terms of biological role, promotes RNA polymerase assembly. Latches the N- and C-terminal regions of the beta' subunit thereby facilitating its interaction with the beta and alpha subunits. This Histophilus somni (strain 129Pt) (Haemophilus somnus) protein is DNA-directed RNA polymerase subunit omega.